The following is a 127-amino-acid chain: Large ribosomal subunit protein bL17 (127 aa).

It belongs to the bacterial ribosomal protein bL17 family. As to quaternary structure, part of the 50S ribosomal subunit. Contacts protein L32.

The chain is Large ribosomal subunit protein bL17 from Photobacterium profundum (strain SS9).